The sequence spans 250 residues: Orotidine 5'-phosphate decarboxylase (250 aa).

Residues Asp-9, Lys-40, 67–76, Thr-132, Arg-190, Gln-204, Gly-224, and Arg-225 each bind substrate; that span reads DLKFHDIPNT. Lys-69 (proton donor) is an active-site residue.

The protein belongs to the OMP decarboxylase family. Type 1 subfamily. Homodimer.

The enzyme catalyses orotidine 5'-phosphate + H(+) = UMP + CO2. Its pathway is pyrimidine metabolism; UMP biosynthesis via de novo pathway; UMP from orotate: step 2/2. Its function is as follows. Catalyzes the decarboxylation of orotidine 5'-monophosphate (OMP) to uridine 5'-monophosphate (UMP). The polypeptide is Orotidine 5'-phosphate decarboxylase (Nitratidesulfovibrio vulgaris (strain DSM 19637 / Miyazaki F) (Desulfovibrio vulgaris)).